We begin with the raw amino-acid sequence, 204 residues long: Viral interleukin-6 homolog (204 aa).

The N-terminal stretch at 1 to 22 (MRWFKLWSILLVGSLLVSGTRG) is a signal peptide.

The protein belongs to the IL-6 superfamily. Interacts with host IL6ST.

Its function is as follows. Initiates signal transduction through binding to interleukin-6 receptor subunit beta IL6ST, independently of the cognate IL6 receptor IL6R. In infected primary effusion lymphoma cells, promotes proliferation of cells, protects them from apoptosis, and promotes immune evasion of interferon activity. Also drives blood to lymphatic endothelial cell differentiation. The sequence is that of Viral interleukin-6 homolog (K2) from Homo sapiens (Human).